The sequence spans 132 residues: Binder of sperm protein homolog 1 (132 aa).

The signal sequence occupies residues 1-17 (MGSLMLLFVETTRNSSA). 2 consecutive Fibronectin type-II domains span residues 40 to 84 (VTDG…FCSA) and 85 to 132 (EDFA…KYCE). Disulfide bonds link C45/C69, C59/C82, C90/C116, and C104/C131. A glycan (N-linked (GlcNAc...) asparagine) is linked at N53.

Belongs to the seminal plasma protein family. As to expression, expressed only in the epididymis.

Its subcellular location is the secreted. Functionally, binds sperm in vitro and promotes sperm capacitation. Specifically promotes capacitation induced by high density lipoproteins (HDLs). Also binds heparin, phospholipid liposomes, and weakly to gelatin. Does not bind chondroitin sulfate B. The sequence is that of Binder of sperm protein homolog 1 (BSPH1) from Homo sapiens (Human).